The following is a 604-amino-acid chain: Glutamine--fructose-6-phosphate aminotransferase [isomerizing] (604 aa).

The active-site Nucleophile; for GATase activity is Cys2. A Glutamine amidotransferase type-2 domain is found at 2–216 (CGIVGYVGFR…DGDVVRLTRE (215 aa)). SIS domains are found at residues 281-420 (LALD…ARGA) and 453-594 (VAEK…VDQP). Catalysis depends on Lys599, which acts as the For Fru-6P isomerization activity.

Homodimer.

The protein resides in the cytoplasm. It catalyses the reaction D-fructose 6-phosphate + L-glutamine = D-glucosamine 6-phosphate + L-glutamate. Catalyzes the first step in hexosamine metabolism, converting fructose-6P into glucosamine-6P using glutamine as a nitrogen source. The polypeptide is Glutamine--fructose-6-phosphate aminotransferase [isomerizing] (Thermus thermophilus (strain ATCC BAA-163 / DSM 7039 / HB27)).